The primary structure comprises 507 residues: Maturase K (507 aa).

This sequence belongs to the intron maturase 2 family. MatK subfamily.

The protein localises to the plastid. The protein resides in the chloroplast. Usually encoded in the trnK tRNA gene intron. Probably assists in splicing its own and other chloroplast group II introns. This is Maturase K from Araucaria heterophylla (Norfolk Island pine).